Consider the following 372-residue polypeptide: NAD(P)H-quinone oxidoreductase subunit 1 (372 aa).

8 helical membrane passes run 27-47 (LIWLPLPMLLVLTAAMVGVLV), 97-117 (LLFTLGPVLVLVPVILSWLIV), 128-148 (VGIGIFLWISLSSIQPIGLLM), 166-186 (AAQSISYEIPLALAVLAVVMM), 204-224 (LLSWNVWRQPVGFLIFWICAL), 266-286 (VLSSLLVAVLYLGGWGFPIPV), 308-328 (SVGIVMTVLKAYLLVFLAILL), and 347-367 (FLLPIALGNLLITAALKLAFP).

It belongs to the complex I subunit 1 family. NDH-1 is composed of at least 11 different subunits.

It localises to the cellular thylakoid membrane. It catalyses the reaction a plastoquinone + NADH + (n+1) H(+)(in) = a plastoquinol + NAD(+) + n H(+)(out). The enzyme catalyses a plastoquinone + NADPH + (n+1) H(+)(in) = a plastoquinol + NADP(+) + n H(+)(out). Its function is as follows. NDH-1 shuttles electrons from an unknown electron donor, via FMN and iron-sulfur (Fe-S) centers, to quinones in the respiratory and/or the photosynthetic chain. The immediate electron acceptor for the enzyme in this species is believed to be plastoquinone. Couples the redox reaction to proton translocation, and thus conserves the redox energy in a proton gradient. This is NAD(P)H-quinone oxidoreductase subunit 1 from Prochlorococcus marinus (strain MIT 9313).